A 1242-amino-acid chain; its full sequence is Structural polyprotein (1242 aa).

The tract at residues 1–36 is necessary for nucleocapsid assembly and virus assembly; sequence MFPYPTLNYPPMAPVNPMAYRDPNPPRRRWRPFRPP. The tract at residues 1-104 is disordered; the sequence is MFPYPTLNYP…KQKPGKRQRM (104 aa). Positions 37–70 are host transcription inhibition; sequence LAAQIEDLRRSIANLTFKQRAPNPPAGPPAKRKK. Residues 44–51 carry the Supraphysiological nuclear export signal motif; sequence LRRSIANL. Residues 66-104 show a composition bias toward basic residues; it reads AKRKKPAPKPKPAAPKKKRQPPPAKKQKRKQKPGKRQRM. The Nuclear localization signal motif lies at 67–70; sequence KRKK. The interval 83 to 113 is binding to the viral RNA; the sequence is KRQPPPAKKQKRKQKPGKRQRMCMKLESDKT. Positions 98–112 are ribosome-binding; it reads PGKRQRMCMKLESDK. Phosphoserine is present on Ser-110. A Peptidase S3 domain is found at 112 to 261; the sequence is KTFPIMLNGQ…KDTPEGSEPW (150 aa). Phosphothreonine is present on Thr-113. Catalysis depends on charge relay system residues His-138, Asp-160, and Ser-212. The interval 262-273 is functions as an uncleaved signal peptide for the precursor of protein E3/E2; the sequence is SLTTVMCVLANI. N-linked (GlcNAc...) asparagine; by host glycosylation is present at Asn-272. The Extracellular segment spans residues 325-688; it reads DLETHFTQYK…YYYNRYPMTT (364 aa). A helical membrane pass occupies residues 689-709; the sequence is VIGLCTCVAIIMVSCVTSVWL. At 710-744 the chain is on the cytoplasmic side; it reads LCRTRNLCITPYRLAPNAQVPILLAVLCCVKPTRA. S-palmitoyl cysteine; by host attachment occurs at residues Cys-717, Cys-737, and Cys-738. The interval 717 to 737 is transient transmembrane before p62-6K protein processing; that stretch reads CITPYRLAPNAQVPILLAVLC. The Extracellular portion of the chain corresponds to 745-759; it reads DDTLQVLNYLWNNNQ. Helical transmembrane passes span 760–780 and 781–801; these read NFFWMQTLIPLAALIVCMRML and RCLLCCGPAFLLVCGALGAAA. The Extracellular segment spans residues 802 to 1218; sequence YEHAAVMPNK…WSWLKVLVGS (417 aa). 8 cysteine pairs are disulfide-bonded: Cys-850/Cys-915, Cys-863/Cys-895, Cys-864/Cys-897, Cys-869/Cys-879, Cys-1061/Cys-1073, Cys-1103/Cys-1178, Cys-1108/Cys-1182, and Cys-1130/Cys-1172. Residues 885-902 are E1 fusion peptide loop; that stretch reads VYPFMWGGAYCFCDTENT. The helical transmembrane segment at 1219-1239 threads the bilayer; that stretch reads TSAFIVLGLIATAVVALVLFT. The Cytoplasmic segment spans residues 1240-1242; the sequence is HRH.

In terms of assembly, part of a tetrameric complex composed of host CRM1, host importin alpha/beta dimer and the viral capsid; this complex blocks the receptor-mediated transport through the nuclear pore. Interacts with host phosphatase PPP1CA; this interaction dephosphorylates the capsid protein, which increases its ability to bind to the viral genome. Interacts with host karyopherin KPNA4; this interaction allows the nuclear import of the viral capsid protein. Interacts with spike glycoprotein E2. Interacts with host IRAK1; the interaction leads to inhibition of IRAK1-dependent signaling. The precursor of protein E3/E2 and E1 form a heterodimer shortly after synthesis. As to quaternary structure, the precursor of protein E3/E2 and E1 form a heterodimer shortly after synthesis. Processing of the precursor of protein E3/E2 into E2 and E3 results in a heterodimer of the spike glycoproteins E2 and E1. Spike at virion surface are constituted of three E2-E1 heterodimers. After target cell attachment and endocytosis, E1 change conformation to form homotrimers. Interacts with 6K protein. In terms of assembly, processing of the precursor of protein E3/E2 into E2 and E3 results in a heterodimer of the spike glycoproteins E2 and E1. Spike at virion surface are constituted of three E2-E1 heterodimers. Interacts with 6K protein. Interacts with spike glycoprotein E1. Interacts with spike glycoprotein E2. Structural polyprotein: Specific enzymatic cleavages in vivo yield mature proteins. Capsid protein is auto-cleaved during polyprotein translation, unmasking a signal peptide at the N-terminus of the precursor of E3/E2. The remaining polyprotein is then targeted to the host endoplasmic reticulum, where host signal peptidase cleaves it into pE2, 6K and E1 proteins. pE2 is further processed to mature E3 and E2 by host furin in trans-Golgi vesicle. In terms of processing, phosphorylated on serine and threonine residues. Post-translationally, palmitoylated via thioester bonds. These palmitoylations may induce disruption of the C-terminus transmembrane. This would result in the reorientation of E2 C-terminus from lumenal to cytoplasmic side. N-glycosylated. In terms of processing, palmitoylated via thioester bonds.

The protein resides in the virion. It is found in the host cytoplasm. It localises to the host cell membrane. The protein localises to the host nucleus. Its subcellular location is the virion membrane. The catalysed reaction is Autocatalytic release of the core protein from the N-terminus of the togavirus structural polyprotein by hydrolysis of a -Trp-|-Ser- bond.. Its function is as follows. Forms an icosahedral capsid with a T=4 symmetry composed of 240 copies of the capsid protein surrounded by a lipid membrane through which penetrate 80 spikes composed of trimers of E1-E2 heterodimers. The capsid protein binds to the viral RNA genome at a site adjacent to a ribosome binding site for viral genome translation following genome release. Possesses a protease activity that results in its autocatalytic cleavage from the nascent structural protein. Following its self-cleavage, the capsid protein transiently associates with ribosomes, and within several minutes the protein binds to viral RNA and rapidly assembles into icosahedric core particles. The resulting nucleocapsid eventually associates with the cytoplasmic domain of the spike glycoprotein E2 at the cell membrane, leading to budding and formation of mature virions. In case of infection, new virions attach to target cells and after clathrin-mediated endocytosis their membrane fuses with the host endosomal membrane. This leads to the release of the nucleocapsid into the cytoplasm, followed by an uncoating event necessary for the genomic RNA to become accessible. The uncoating might be triggered by the interaction of capsid proteins with ribosomes. Binding of ribosomes would release the genomic RNA since the same region is genomic RNA-binding and ribosome-binding. Specifically inhibits interleukin-1 receptor-associated kinase 1/IRAK1-dependent signaling during viral entry, representing a means by which the alphaviruses may evade innate immune detection and activation prior to viral gene expression. Inhibits host transcription. Forms a tetrameric complex with XPO1/CRM1 and the nuclear import receptor importin. This complex blocks the central channel of host nuclear pores thereby inhibiting the receptor-mediated nuclear transport and thus the host mRNA and rRNA transcription. The inhibition of transcription is linked to a cytopathic effect on the host cell. Provides the signal sequence for the translocation of the precursor of protein E3/E2 to the host endoplasmic reticulum. Furin-cleaved E3 remains associated with spike glycoprotein E1 and mediates pH protection of the latter during the transport via the secretory pathway. After virion release from the host cell, the assembly protein E3 is gradually released in the extracellular space. In terms of biological role, plays a role in viral attachment to target host cell, by binding to the cell receptor. Synthesized as a p62 precursor which is processed by furin at the cell membrane just before virion budding, giving rise to E2-E1 heterodimer. The p62-E1 heterodimer is stable, whereas E2-E1 is unstable and dissociate at low pH. p62 is processed at the last step, presumably to avoid E1 fusion activation before its final export to cell surface. E2 C-terminus contains a transitory transmembrane that would be disrupted by palmitoylation, resulting in reorientation of the C-terminal tail from lumenal to cytoplasmic side. This step is critical since E2 C-terminus is involved in budding by interacting with capsid proteins. This release of E2 C-terminus in cytoplasm occurs lately in protein export, and precludes premature assembly of particles at the endoplasmic reticulum membrane. Functionally, constitutive membrane protein involved in virus glycoprotein processing, cell permeabilization, and the budding of viral particles. Disrupts the calcium homeostasis of the cell, probably at the endoplasmic reticulum level. This leads to cytoplasmic calcium elevation. Because of its lipophilic properties, the 6K protein is postulated to influence the selection of lipids that interact with the transmembrane domains of the glycoproteins, which, in turn, affects the deformability of the bilayer required for the extreme curvature that occurs as budding proceeds. Present in low amount in virions, about 3% compared to viral glycoproteins. Its function is as follows. Class II viral fusion protein. Fusion activity is inactive as long as E1 is bound to E2 in mature virion. After virus attachment to target cell and endocytosis, acidification of the endosome would induce dissociation of E1/E2 heterodimer and concomitant trimerization of the E1 subunits. This E1 trimer is fusion active, and promotes release of viral nucleocapsid in cytoplasm after endosome and viral membrane fusion. Efficient fusion requires the presence of cholesterol and sphingolipid in the target membrane. Fusion is optimal at levels of about 1 molecule of cholesterol per 2 molecules of phospholipids, and is specific for sterols containing a 3-beta-hydroxyl group. This chain is Structural polyprotein, found in Aedes (Human).